Consider the following 605-residue polypeptide: NADH-ubiquinone oxidoreductase chain 5 (605 aa).

Helical transmembrane passes span 11-31 (ILITELLILALSALMTMLPPI), 49-69 (LSLTSILIHILIEEPSSISSL), 77-97 (LAMSIKIDYYSLIFISIALFI), 120-140 (MFLLLFLMSMIMFIAANNFFP), 141-161 (MLVGWGTMGLMSYLLISWWHG), 178-198 (LADIGFILTFSWCITYMSSLD), 202-222 (FFATSTLVTGVPILGMLMAAM), 244-264 (VSALLHSSTMVTAGVYLLIGM), 273-295 (GFSEACLTMGAATALYASFKALL), 302-322 (IIAFSTLSQLGFMMATVGLNH), 325-345 (LAFMHLCMHAFFKAMMFLCAG), 371-391 (ASCFTLSTLALAGFPFLTGFF), 408-425 (LWATMLLISTMFTAIYSL), 457-477 (LALASIVTGSLFSLFTPPIYT), 488-508 (LAALTLTFMSAFLAMYLISLA), and 584-604 (IKTYFMAFLVTFVIILYIMLF).

It belongs to the complex I subunit 5 family.

Its subcellular location is the mitochondrion inner membrane. It catalyses the reaction a ubiquinone + NADH + 5 H(+)(in) = a ubiquinol + NAD(+) + 4 H(+)(out). Functionally, core subunit of the mitochondrial membrane respiratory chain NADH dehydrogenase (Complex I) that is believed to belong to the minimal assembly required for catalysis. Complex I functions in the transfer of electrons from NADH to the respiratory chain. The immediate electron acceptor for the enzyme is believed to be ubiquinone. This chain is NADH-ubiquinone oxidoreductase chain 5 (MT-ND5), found in Pelomedusa subrufa (African side-necked turtle).